Reading from the N-terminus, the 157-residue chain is Transcription elongation factor GreA (157 aa).

It belongs to the GreA/GreB family.

Its function is as follows. Necessary for efficient RNA polymerase transcription elongation past template-encoded arresting sites. The arresting sites in DNA have the property of trapping a certain fraction of elongating RNA polymerases that pass through, resulting in locked ternary complexes. Cleavage of the nascent transcript by cleavage factors such as GreA or GreB allows the resumption of elongation from the new 3'terminus. GreA releases sequences of 2 to 3 nucleotides. In Bartonella henselae (strain ATCC 49882 / DSM 28221 / CCUG 30454 / Houston 1) (Rochalimaea henselae), this protein is Transcription elongation factor GreA.